The primary structure comprises 758 residues: Actin filament-associated protein 1-like 1 (758 aa).

The segment at 91-194 is disordered; the sequence is YRDSSENLSC…YESYDEEDEE (104 aa). Positions 102–120 are enriched in pro residues; it reads LPPPPSAPPPPLPTTPPPE. Residues 137–148 show a composition bias toward polar residues; that stretch reads YITSRNSSSPPN. Low complexity predominate over residues 177-186; that stretch reads ESDGLSSSYE. Positions 216–312 constitute a PH 1 domain; that stretch reads DSRICAFLLR…WLRVIKEVIS (97 aa). The interval 335–369 is disordered; sequence SHDKTSDSDSAANGENSSLSSGKENRDTGKCRKGG. The segment covering 342–356 has biased composition (polar residues); it reads SDSAANGENSSLSSG. A PH 2 domain is found at 409-503; the sequence is EVPCCGYLSV…WLGLLLAQTG (95 aa). Positions 602-690 form a coiled coil; the sequence is KTRAEEDARK…TEVKENLKKS (89 aa). Residues 692-758 are disordered; the sequence is AGGPTLGLAV…KAKEWEKKKP (67 aa). Over residues 749 to 758 the composition is skewed to basic and acidic residues; that stretch reads KAKEWEKKKP.

Its subcellular location is the cytoplasm. It is found in the cell projection. The protein resides in the podosome. The protein localises to the invadopodium. It localises to the cytoskeleton. Its subcellular location is the stress fiber. Its function is as follows. May be involved in podosome and invadosome formation. This chain is Actin filament-associated protein 1-like 1 (afap1l1), found in Xenopus tropicalis (Western clawed frog).